A 50-amino-acid polypeptide reads, in one-letter code: Large ribosomal subunit protein eL39 (50 aa).

It belongs to the eukaryotic ribosomal protein eL39 family. In terms of assembly, part of the 50S ribosomal subunit. Interacts weakly with protein L23.

Its function is as follows. Binds to the 23S rRNA. Forms part of the polypeptide exit tunnel. The protein is Large ribosomal subunit protein eL39 (rpl39e) of Haloarcula marismortui (strain ATCC 43049 / DSM 3752 / JCM 8966 / VKM B-1809) (Halobacterium marismortui).